We begin with the raw amino-acid sequence, 111 residues long: Large ribosomal subunit protein P1 (111 aa).

The segment at 84–111 (PAEAAAAEEKKEEEKEESDEDMGFGLFD) is disordered.

This sequence belongs to the eukaryotic ribosomal protein P1/P2 family. In terms of assembly, P1 and P2 exist as dimers at the large ribosomal subunit. Phosphorylated.

Plays an important role in the elongation step of protein synthesis. In Aspergillus fumigatus (strain ATCC MYA-4609 / CBS 101355 / FGSC A1100 / Af293) (Neosartorya fumigata), this protein is Large ribosomal subunit protein P1.